The chain runs to 733 residues: Ribosomal protein S6 kinase alpha-2 (733 aa).

Positions 59–318 (FELLKVLGQG…VEEIKRHPFF (260 aa)) constitute a Protein kinase 1 domain. Residues 65–73 (LGQGSYGKV) and Lys-91 contribute to the ATP site. Asp-184 functions as the Proton acceptor in the catalytic mechanism. Ser-218 is subject to Phosphoserine; by PDPK1. Residues 319-388 (VTIDWNTLYR…VASSLIQEPS (70 aa)) enclose the AGC-kinase C-terminal domain. Residue Ser-377 is modified to Phosphoserine. Residues 415-672 (YEIKEDIGVG…AMQVLKHPWV (258 aa)) form the Protein kinase 2 domain. ATP is bound by residues 421–429 (IGVGSYSVC) and Lys-444. Asp-532 functions as the Proton acceptor in the catalytic mechanism.

The protein belongs to the protein kinase superfamily. AGC Ser/Thr protein kinase family. S6 kinase subfamily. In terms of assembly, forms a complex with either MAPK1/ERK2 or MAPK3/ERK1 in quiescent cells. Transiently dissociates following mitogenic stimulation. Interacts with FBXO5; cooperate to induce the metaphase arrest of early blastomeres; increases and stabilizes interaction of FBXO5 with CDC20. Mg(2+) serves as cofactor. Post-translationally, activated by phosphorylation at Ser-218 by PDPK1. Autophosphorylated on Ser-377, as part of the activation process. May be phosphorylated at Thr-356 and Ser-360 by MAPK1/ERK2 and MAPK3/ERK1. N-terminal myristoylation results in an activated kinase in the absence of added growth factors. As to expression, widely expressed with higher expression in lung, skeletal muscle, brain, uterus, ovary, thyroid and prostate.

The protein resides in the nucleus. Its subcellular location is the cytoplasm. It catalyses the reaction L-seryl-[protein] + ATP = O-phospho-L-seryl-[protein] + ADP + H(+). The catalysed reaction is L-threonyl-[protein] + ATP = O-phospho-L-threonyl-[protein] + ADP + H(+). Upon extracellular signal or mitogen stimulation, phosphorylated at Thr-570 in the C-terminal kinase domain (CTKD) by MAPK1/ERK2 and MAPK3/ERK1. The activated CTKD then autophosphorylates Ser-377, allowing binding of PDPK1, which in turn phosphorylates Ser-218 in the N-terminal kinase domain (NTDK) leading to the full activation of the protein and subsequent phosphorylation of the substrates by the NTKD. Functionally, serine/threonine-protein kinase that acts downstream of ERK (MAPK1/ERK2 and MAPK3/ERK1) signaling and mediates mitogenic and stress-induced activation of transcription factors, regulates translation, and mediates cellular proliferation, survival, and differentiation. May function as tumor suppressor in epithelial ovarian cancer cells. This chain is Ribosomal protein S6 kinase alpha-2 (RPS6KA2), found in Homo sapiens (Human).